The primary structure comprises 304 residues: Dihydroorotate dehydrogenase B (NAD(+)), catalytic subunit (304 aa).

FMN contacts are provided by residues S21 and 45–46 (KA). Substrate-binding positions include K45 and 69–73 (NAIGL). Residues N99 and N127 each contribute to the FMN site. Residue N127 coordinates substrate. C130 serves as the catalytic Nucleophile. Positions 165 and 191 each coordinate FMN. 192 to 193 (NT) contacts substrate. Residues G217, 243 to 244 (GG), and 265 to 266 (GT) each bind FMN.

This sequence belongs to the dihydroorotate dehydrogenase family. Type 1 subfamily. Heterotetramer of 2 PyrK and 2 PyrD type B subunits. The cofactor is FMN.

It localises to the cytoplasm. It catalyses the reaction (S)-dihydroorotate + NAD(+) = orotate + NADH + H(+). It participates in pyrimidine metabolism; UMP biosynthesis via de novo pathway; orotate from (S)-dihydroorotate (NAD(+) route): step 1/1. In terms of biological role, catalyzes the conversion of dihydroorotate to orotate with NAD(+) as electron acceptor. This chain is Dihydroorotate dehydrogenase B (NAD(+)), catalytic subunit (pyrD), found in Listeria innocua serovar 6a (strain ATCC BAA-680 / CLIP 11262).